We begin with the raw amino-acid sequence, 318 residues long: Lipoyl synthase 1 (318 aa).

Residues 6 to 32 (DTISNPLRPRHPEKVNRPDSASPPKPD) form a disordered region. Residues Cys-60, Cys-65, Cys-71, Cys-86, Cys-90, Cys-93, and Ser-299 each coordinate [4Fe-4S] cluster. The Radical SAM core domain occupies 72 to 288 (WDKKHATFMI…EKVAYTKGFL (217 aa)).

Belongs to the radical SAM superfamily. Lipoyl synthase family. [4Fe-4S] cluster is required as a cofactor.

The protein localises to the cytoplasm. The enzyme catalyses [[Fe-S] cluster scaffold protein carrying a second [4Fe-4S](2+) cluster] + N(6)-octanoyl-L-lysyl-[protein] + 2 oxidized [2Fe-2S]-[ferredoxin] + 2 S-adenosyl-L-methionine + 4 H(+) = [[Fe-S] cluster scaffold protein] + N(6)-[(R)-dihydrolipoyl]-L-lysyl-[protein] + 4 Fe(3+) + 2 hydrogen sulfide + 2 5'-deoxyadenosine + 2 L-methionine + 2 reduced [2Fe-2S]-[ferredoxin]. It participates in protein modification; protein lipoylation via endogenous pathway; protein N(6)-(lipoyl)lysine from octanoyl-[acyl-carrier-protein]: step 2/2. Functionally, catalyzes the radical-mediated insertion of two sulfur atoms into the C-6 and C-8 positions of the octanoyl moiety bound to the lipoyl domains of lipoate-dependent enzymes, thereby converting the octanoylated domains into lipoylated derivatives. This is Lipoyl synthase 1 from Bradyrhizobium diazoefficiens (strain JCM 10833 / BCRC 13528 / IAM 13628 / NBRC 14792 / USDA 110).